The following is a 197-amino-acid chain: MATSPKINRREHILQCLAQMLETSPGQRITTAKLAAEVGVSEAALYRHFPSKARMFEGLIEFIEDAILSRLNLIMDEEKDTMMRCQLVLQLLLVFSERNPGISRVLNGDALLGENERLRSRISVLFAKIETQLKQILREKTLREGQGFNLDEAILANLLLAVAEGRIAQFVRSEFKQKPTLHFDEQWTFIQQQLLRS.

The region spanning 7–67 (INRREHILQC…GLIEFIEDAI (61 aa)) is the HTH tetR-type domain. Residues 30-49 (TTAKLAAEVGVSEAALYRHF) constitute a DNA-binding region (H-T-H motif).

It belongs to the nucleoid occlusion factor SlmA family. In terms of assembly, homodimer. Interacts with FtsZ.

It localises to the cytoplasm. Its subcellular location is the nucleoid. In terms of biological role, required for nucleoid occlusion (NO) phenomenon, which prevents Z-ring formation and cell division over the nucleoid. Acts as a DNA-associated cell division inhibitor that binds simultaneously chromosomal DNA and FtsZ, and disrupts the assembly of FtsZ polymers. SlmA-DNA-binding sequences (SBS) are dispersed on non-Ter regions of the chromosome, preventing FtsZ polymerization at these regions. This chain is Nucleoid occlusion factor SlmA, found in Shewanella denitrificans (strain OS217 / ATCC BAA-1090 / DSM 15013).